Consider the following 138-residue polypeptide: Cysteine desulfuration protein SufE (138 aa).

The Cysteine persulfide intermediate role is filled by C51.

This sequence belongs to the SufE family. Homodimer. Interacts with SufS.

The protein localises to the cytoplasm. Its pathway is cofactor biosynthesis; iron-sulfur cluster biosynthesis. Participates in cysteine desulfuration mediated by SufS. Cysteine desulfuration mobilizes sulfur from L-cysteine to yield L-alanine and constitutes an essential step in sulfur metabolism for biosynthesis of a variety of sulfur-containing biomolecules. Functions as a sulfur acceptor for SufS, by mediating the direct transfer of the sulfur atom from the S-sulfanylcysteine of SufS, an intermediate product of cysteine desulfuration process. The sequence is that of Cysteine desulfuration protein SufE from Cronobacter sakazakii (strain ATCC BAA-894) (Enterobacter sakazakii).